Reading from the N-terminus, the 156-residue chain is MSKKVTDTVQEMAQPILDDLQLELVDIEFVKEGQNWFLRVFIDSENGVDIEECAKVSEALSEKLDEADPITQNYFLEVSSPGAERPLKKKADFEKSLGKNVYMKTYEPIDGLKVFEGKLAEFDGQTVTIEMTVKTRKKRVNIPYEKIANARLAVTF.

This sequence belongs to the RimP family.

The protein resides in the cytoplasm. Its function is as follows. Required for maturation of 30S ribosomal subunits. The chain is Ribosome maturation factor RimP from Bacillus velezensis (strain DSM 23117 / BGSC 10A6 / LMG 26770 / FZB42) (Bacillus amyloliquefaciens subsp. plantarum).